A 357-amino-acid chain; its full sequence is 3-isopropylmalate dehydrogenase (357 aa).

Residue 76 to 89 (GPQWDTIDPALRPE) participates in NAD(+) binding. Residues Arg-96, Arg-106, Arg-134, and Asp-224 each contribute to the substrate site. Mg(2+) is bound by residues Asp-224, Asp-248, and Asp-252. 282–294 (GSAPDIAGQGVAN) lines the NAD(+) pocket.

The protein belongs to the isocitrate and isopropylmalate dehydrogenases family. LeuB type 1 subfamily. As to quaternary structure, homodimer. Requires Mg(2+) as cofactor. Mn(2+) is required as a cofactor.

The protein localises to the cytoplasm. It catalyses the reaction (2R,3S)-3-isopropylmalate + NAD(+) = 4-methyl-2-oxopentanoate + CO2 + NADH. The protein operates within amino-acid biosynthesis; L-leucine biosynthesis; L-leucine from 3-methyl-2-oxobutanoate: step 3/4. Functionally, catalyzes the oxidation of 3-carboxy-2-hydroxy-4-methylpentanoate (3-isopropylmalate) to 3-carboxy-4-methyl-2-oxopentanoate. The product decarboxylates to 4-methyl-2 oxopentanoate. The protein is 3-isopropylmalate dehydrogenase of Xylella fastidiosa (strain 9a5c).